The sequence spans 199 residues: Small ribosomal subunit protein uS4c (199 aa).

A compositionally biased stretch (basic and acidic residues) spans 1 to 24 (MESDQSKVESDQSKMESDQSKVES). The interval 1 to 35 (MESDQSKVESDQSKMESDQSKVESDQSISQSTSKK) is disordered. Positions 84–146 (MRLDNIIFRL…QKSQELIKRN (63 aa)) constitute an S4 RNA-binding domain.

The protein belongs to the universal ribosomal protein uS4 family. In terms of assembly, part of the 30S ribosomal subunit. Contacts protein S5. The interaction surface between S4 and S5 is involved in control of translational fidelity.

Its subcellular location is the plastid. It is found in the chloroplast. Functionally, one of the primary rRNA binding proteins, it binds directly to 16S rRNA where it nucleates assembly of the body of the 30S subunit. In terms of biological role, with S5 and S12 plays an important role in translational accuracy. The chain is Small ribosomal subunit protein uS4c (rps4) from Psilotum nudum (Whisk fern).